Reading from the N-terminus, the 125-residue chain is Small ribosomal subunit protein uS12 (125 aa).

The tract at residues 1 to 28 (MPTINQLVRKGREKVKKKSKAPALEGNP) is disordered. Residues 9-20 (RKGREKVKKKSK) show a composition bias toward basic residues. Residue D89 is modified to 3-methylthioaspartic acid. The segment at 104–125 (AAGVKDRKQSRSKYGTKRPKEK) is disordered. Over residues 113-125 (SRSKYGTKRPKEK) the composition is skewed to basic residues.

This sequence belongs to the universal ribosomal protein uS12 family. Part of the 30S ribosomal subunit. Contacts proteins S8 and S17. May interact with IF1 in the 30S initiation complex.

Its function is as follows. With S4 and S5 plays an important role in translational accuracy. Interacts with and stabilizes bases of the 16S rRNA that are involved in tRNA selection in the A site and with the mRNA backbone. Located at the interface of the 30S and 50S subunits, it traverses the body of the 30S subunit contacting proteins on the other side and probably holding the rRNA structure together. The combined cluster of proteins S8, S12 and S17 appears to hold together the shoulder and platform of the 30S subunit. This chain is Small ribosomal subunit protein uS12, found in Persephonella marina (strain DSM 14350 / EX-H1).